A 326-amino-acid chain; its full sequence is Ribose-phosphate pyrophosphokinase (326 aa).

Residues 45–47 and 104–105 each bind ATP; these read NGE and RQ. 2 residues coordinate Mg(2+): H138 and D178. The active site involves K202. D-ribose 5-phosphate contacts are provided by residues R204, D230, and 234–238; that span reads DTGGT.

It belongs to the ribose-phosphate pyrophosphokinase family. Class I subfamily. Homohexamer. Mg(2+) serves as cofactor.

Its subcellular location is the cytoplasm. The catalysed reaction is D-ribose 5-phosphate + ATP = 5-phospho-alpha-D-ribose 1-diphosphate + AMP + H(+). It participates in metabolic intermediate biosynthesis; 5-phospho-alpha-D-ribose 1-diphosphate biosynthesis; 5-phospho-alpha-D-ribose 1-diphosphate from D-ribose 5-phosphate (route I): step 1/1. Its function is as follows. Involved in the biosynthesis of the central metabolite phospho-alpha-D-ribosyl-1-pyrophosphate (PRPP) via the transfer of pyrophosphoryl group from ATP to 1-hydroxyl of ribose-5-phosphate (Rib-5-P). The sequence is that of Ribose-phosphate pyrophosphokinase from Mycobacterium bovis (strain ATCC BAA-935 / AF2122/97).